Consider the following 461-residue polypeptide: Photosystem II CP43 reaction center protein (461 aa).

A propeptide spanning residues 1 to 2 (ME) is cleaved from the precursor. At Thr3 the chain carries N-acetylthreonine. Thr3 carries the post-translational modification Phosphothreonine. The next 5 helical transmembrane spans lie at 57-81 (LFEV…PHLA), 122-143 (LLGP…KDRN), 166-188 (KALY…RKIT), 243-263 (KPFA…LSYS), and 279-300 (WFNN…ASQA). Glu355 contributes to the [CaMn4O5] cluster binding site. Residues 435–459 (RARAAAAGFEKGIDRDLEPVLSMTP) traverse the membrane as a helical segment.

Belongs to the PsbB/PsbC family. PsbC subfamily. PSII is composed of 1 copy each of membrane proteins PsbA, PsbB, PsbC, PsbD, PsbE, PsbF, PsbH, PsbI, PsbJ, PsbK, PsbL, PsbM, PsbT, PsbX, PsbY, PsbZ, Psb30/Ycf12, at least 3 peripheral proteins of the oxygen-evolving complex and a large number of cofactors. It forms dimeric complexes. Binds multiple chlorophylls and provides some of the ligands for the Ca-4Mn-5O cluster of the oxygen-evolving complex. It may also provide a ligand for a Cl- that is required for oxygen evolution. PSII binds additional chlorophylls, carotenoids and specific lipids. is required as a cofactor.

It localises to the plastid. The protein localises to the chloroplast thylakoid membrane. In terms of biological role, one of the components of the core complex of photosystem II (PSII). It binds chlorophyll and helps catalyze the primary light-induced photochemical processes of PSII. PSII is a light-driven water:plastoquinone oxidoreductase, using light energy to abstract electrons from H(2)O, generating O(2) and a proton gradient subsequently used for ATP formation. The polypeptide is Photosystem II CP43 reaction center protein (Ceratophyllum demersum (Rigid hornwort)).